The sequence spans 64 residues: Large ribosomal subunit protein bL35 (64 aa).

The protein belongs to the bacterial ribosomal protein bL35 family.

The protein is Large ribosomal subunit protein bL35 of Pseudomonas savastanoi pv. phaseolicola (strain 1448A / Race 6) (Pseudomonas syringae pv. phaseolicola (strain 1448A / Race 6)).